We begin with the raw amino-acid sequence, 126 residues long: MARIAGVDLPRDKRIEIGLTYIYGIGLTRSQEILAATGVNPDTRVRELGDQDVAALRNAVAGYQVEGDLRRWESMNVKRLMDIGSYRGRRHRAGLPVRGQRTRTNSRTRRSAKRTVAGKKKAPSKK.

The interval 91 to 126 (HRAGLPVRGQRTRTNSRTRRSAKRTVAGKKKAPSKK) is disordered. A compositionally biased stretch (basic residues) spans 100 to 126 (QRTRTNSRTRRSAKRTVAGKKKAPSKK).

It belongs to the universal ribosomal protein uS13 family. As to quaternary structure, part of the 30S ribosomal subunit. Forms a loose heterodimer with protein S19. Forms two bridges to the 50S subunit in the 70S ribosome.

Its function is as follows. Located at the top of the head of the 30S subunit, it contacts several helices of the 16S rRNA. In the 70S ribosome it contacts the 23S rRNA (bridge B1a) and protein L5 of the 50S subunit (bridge B1b), connecting the 2 subunits; these bridges are implicated in subunit movement. Contacts the tRNAs in the A and P-sites. This Acaryochloris marina (strain MBIC 11017) protein is Small ribosomal subunit protein uS13.